The primary structure comprises 442 residues: 3-oxoacyl-[acyl-carrier-protein] synthase homolog (442 aa).

The region spanning 2–438 is the Ketosynthase family 3 (KS3) domain; it reads SRRVVITGLG…GVNTSLLFKK (437 aa). Catalysis depends on for beta-ketoacyl synthase activity residues cysteine 187, histidine 322, and histidine 362.

The protein belongs to the thiolase-like superfamily. Beta-ketoacyl-ACP synthases family.

It is found in the mitochondrion. It carries out the reaction a fatty acyl-[ACP] + malonyl-[ACP] + H(+) = a 3-oxoacyl-[ACP] + holo-[ACP] + CO2. In terms of biological role, possibly involved in the synthesis of a specialized molecule, probably related to a fatty acid, which is essential for mitochondrial respiration. Is essential for oxygen uptake and the presence of cytochromes A and B. The chain is 3-oxoacyl-[acyl-carrier-protein] synthase homolog (CEM1) from Saccharomyces cerevisiae (strain ATCC 204508 / S288c) (Baker's yeast).